The following is a 316-amino-acid chain: Ribosomal RNA small subunit methyltransferase H (316 aa).

S-adenosyl-L-methionine contacts are provided by residues Ala32–His34, Asp52, Phe79, Asp100, and Gln107.

It belongs to the methyltransferase superfamily. RsmH family.

It is found in the cytoplasm. It catalyses the reaction cytidine(1402) in 16S rRNA + S-adenosyl-L-methionine = N(4)-methylcytidine(1402) in 16S rRNA + S-adenosyl-L-homocysteine + H(+). In terms of biological role, specifically methylates the N4 position of cytidine in position 1402 (C1402) of 16S rRNA. This Lysinibacillus sphaericus (strain C3-41) protein is Ribosomal RNA small subunit methyltransferase H.